The sequence spans 89 residues: Small ribosomal subunit protein bS20 (89 aa).

Composition is skewed to basic residues over residues 1–10 and 17–29; these read MANIKSKIKS and ARKRNSMIKSRVK. The segment at 1-29 is disordered; it reads MANIKSKIKSIKTMEKARKRNSMIKSRVK.

Belongs to the bacterial ribosomal protein bS20 family.

Its function is as follows. Binds directly to 16S ribosomal RNA. This Mycoplasmopsis pulmonis (strain UAB CTIP) (Mycoplasma pulmonis) protein is Small ribosomal subunit protein bS20.